Consider the following 84-residue polypeptide: Large ribosomal subunit protein bL31B (84 aa).

Belongs to the bacterial ribosomal protein bL31 family. Type B subfamily. In terms of assembly, part of the 50S ribosomal subunit.

The protein is Large ribosomal subunit protein bL31B of Rhodococcus erythropolis (strain PR4 / NBRC 100887).